A 552-amino-acid polypeptide reads, in one-letter code: ATP synthase subunit alpha (552 aa).

G173–T180 contributes to the ATP binding site. A disordered region spans residues D516 to G552.

The protein belongs to the ATPase alpha/beta chains family. F-type ATPases have 2 components, CF(1) - the catalytic core - and CF(0) - the membrane proton channel. CF(1) has five subunits: alpha(3), beta(3), gamma(1), delta(1), epsilon(1). CF(0) has three main subunits: a(1), b(2) and c(9-12). The alpha and beta chains form an alternating ring which encloses part of the gamma chain. CF(1) is attached to CF(0) by a central stalk formed by the gamma and epsilon chains, while a peripheral stalk is formed by the delta and b chains.

The protein resides in the cell membrane. The enzyme catalyses ATP + H2O + 4 H(+)(in) = ADP + phosphate + 5 H(+)(out). Its function is as follows. Produces ATP from ADP in the presence of a proton gradient across the membrane. The alpha chain is a regulatory subunit. This Frankia casuarinae (strain DSM 45818 / CECT 9043 / HFP020203 / CcI3) protein is ATP synthase subunit alpha.